A 144-amino-acid polypeptide reads, in one-letter code: Large ribosomal subunit protein uL16 (144 aa).

Belongs to the universal ribosomal protein uL16 family. As to quaternary structure, part of the 50S ribosomal subunit.

Its function is as follows. Binds 23S rRNA and is also seen to make contacts with the A and possibly P site tRNAs. The protein is Large ribosomal subunit protein uL16 of Lactiplantibacillus plantarum (strain ATCC BAA-793 / NCIMB 8826 / WCFS1) (Lactobacillus plantarum).